We begin with the raw amino-acid sequence, 803 residues long: MDEFVTAEDLVHEYSVLQEPDSVVNWSRYIAAKRDDPCSVSWVYERCLQALPAQWEVWREYLQFRMRLLDGVCAVQHAAEFEKVNRLFWRCVEHNAAVVEAWRLFLGHAQRQGALALVRQVVDAALRGVGLAKHRTVWEDVVAYIEELLPAEETDLGEEQDLHELVRGALFGGAGAEDAGADIWSSAMLRRYIQVAEDAEAVLALLQRTHDYATVVAVYEKHVLPVTRAKHKGRQSYESQFRYLVALDHTGATAKLEDAVARCAQLFPERAPSLTIFLAKHYVKQGNYNRCTDVLTDSLKHTAKSSEFASLYDFLVVFEESLIEVVLEHLQEHPENEERWGADLERHTDQLDGLLADHALLLNDLKLRQEPDNVKHWLDRVELFDKAASKASVYADAIASINYKSQTVPGQLGTLWWQYAQLYIDDGQYETAKTILDKALNVPYNFLQDPELIWTKWAEEELKRAGLDAAMQVLSHALQIPDDHELLRDKFESHEKMPAQTVIFSSLKLWSFYIDLLEASSESDEHLERTKAAYEATIQLKIATPLLFVNYAHYLQDKGNHVESFSIYERAVDIFPAETAFEIWDIYIGEALKYGLPKEQIRDLFESSLKMANEGVECKPFFLLYAKFERDNGMIETAANILHRACRAAQTMDAKRSLWTLCLNWCRQELGGSYARALYEECIQALPNHVAVVYVLEYAKVEEGLKQVKRARALLQYGARLLHPANNADLWEYWELFELRHGNKDTYKDMLQLKRKVEELLEGDGLPVPNQIGNIAFVASTDGLQNPGGESTNINNDELELDM.

HAT repeat units lie at residues 3-34 (EFVT…AAKR), 35-67 (DDPC…FRMR), 79-111 (AEFE…HAQR), 113-147 (GALA…YIEE), 393-425 (VYAD…LYID), 427-463 (GQYE…EELK), 482-519 (DDHE…LLEA), 525-557 (EHLE…YLQD), 559-593 (GNHV…EALK), 596-631 (LPKE…FERD), 633-668 (GMIE…WCRQ), 670-704 (LGGS…VEEG), and 708-740 (VKRA…FELR).

This sequence belongs to the crooked-neck family. In terms of assembly, associated with the spliceosome.

It localises to the nucleus. In terms of biological role, involved in pre-mRNA splicing and cell cycle progression. The chain is Pre-mRNA-splicing factor SYF1 (SYF1) from Eremothecium gossypii (strain ATCC 10895 / CBS 109.51 / FGSC 9923 / NRRL Y-1056) (Yeast).